Reading from the N-terminus, the 146-residue chain is UPF0178 protein BC_3040 (146 aa).

This sequence belongs to the UPF0178 family.

This Bacillus cereus (strain ATCC 14579 / DSM 31 / CCUG 7414 / JCM 2152 / NBRC 15305 / NCIMB 9373 / NCTC 2599 / NRRL B-3711) protein is UPF0178 protein BC_3040.